The chain runs to 90 residues: Chromosomal protein MC1c (90 aa).

Protects DNA against thermal denaturation and modulates transcription. This chain is Chromosomal protein MC1c, found in Methanothrix soehngenii (Methanosaeta concilii).